The following is a 591-amino-acid chain: DDB1- and CUL4-associated factor 8 (591 aa).

A compositionally biased stretch (polar residues) spans 1–25 (MSNKRPNTTDGRTDLANGSLSSSPE). Positions 1-140 (MSNKRPNTTD…EDWVSSETTA (140 aa)) are disordered. A phosphoserine mark is found at serine 22 and serine 23. Positions 40 to 51 (IEVEASDLSLSL) match the Nuclear export signal motif. 2 stretches are compositionally biased toward basic and acidic residues: residues 66-100 (RGTDTESSGEEKDSDSMEDTGHYSINDESRGHGHS) and 118-131 (SRDQDSSDDERALE). 3 positions are modified to phosphoserine: serine 100, serine 123, and serine 124. WD repeat units follow at residues 185 to 224 (GHTGCVNTLHFNQRGTWLASGSDDLKVVVWDWVRRQPVLD), 228 to 269 (GHKS…CCKN), 275 to 315 (QHKG…PASK), 323 to 363 (EKKV…ENEN), 379 to 418 (ESKANITCLVYSHDGTELLASYNDEDIYLFNSSHSDGAQY), 426 to 466 (RNNA…IIQF), and 470 to 509 (DKGGVVNCLEPHPHLPVLATSGLDHDVKIWAPTAEASTEL). Arginine 198 bears the Omega-N-methylarginine; by PRMT1 mark. The tract at residues 552–591 (HRRWREPGVGATDADSDESPSSSDTSDEEEGPDRVQCMPS) is disordered.

It belongs to the WD repeat DCAF8 family. As to quaternary structure, interacts with DDB1, CUL4A and CUL4B. Interacts with KPNA1, KPNB1 and XPO1. As to expression, expressed in the brain.

It localises to the nucleus. The protein resides in the cytoplasm. It participates in protein modification; protein ubiquitination. In terms of biological role, may function as a substrate receptor for CUL4-DDB1 E3 ubiquitin-protein ligase complex. This Mus musculus (Mouse) protein is DDB1- and CUL4-associated factor 8 (Dcaf8).